The sequence spans 608 residues: Centromere DNA-binding protein complex CBF3 subunit B (608 aa).

Residues 14-42 (CSVCTRRKVKCDRMIPCGNCRKRGQDSEC) constitute a DNA-binding region (zn(2)-C6 fungal-type). Phosphoserine is present on S575.

As to quaternary structure, component of the CBF3 copmplex, which is formed of CBF3A/CBF2, CBF3B/CEP3, CBF3C/CTF13 and CBF3D.

The protein resides in the nucleus. Its subcellular location is the chromosome. It localises to the centromere. Functionally, acts as a component of the centromere DNA-binding protein complex CBF3, which is essential for chromosome segregation and movement of centromeres along microtubules. CBF3 is required for the recruitment of other kinetochore complexes to CEN DNA. It plays a role in the attachment of chromosomes to the spindle and binds selectively to a highly conserved DNA sequence called CDEIII, found in centromers and in several promoters. The sequence is that of Centromere DNA-binding protein complex CBF3 subunit B (CEP3) from Saccharomyces cerevisiae (strain ATCC 204508 / S288c) (Baker's yeast).